A 392-amino-acid polypeptide reads, in one-letter code: Heavy metal-associated isoprenylated plant protein 6 (392 aa).

The segment covering 1–19 has biased composition (basic and acidic residues); the sequence is MGEKKEETATKPQGEKKPT. The disordered stretch occupies residues 1–22; the sequence is MGEKKEETATKPQGEKKPTDGG. Positions 23–86 constitute an HMA 1 domain; sequence ITTVVMKLDM…KVADKIKRPV (64 aa). The Cd(2+) site is built by C34 and C37. The disordered stretch occupies residues 89–157; that stretch reads VSTVAPPKKE…PPPPKESTVV (69 aa). The span at 106-145 shows a compositional bias: basic and acidic residues; sequence AEKKPSPAAEEKPAEKKPAAVEKPGEKKEEKKKEEGEKKA. Residues 153–216 enclose the HMA 2 domain; it reads ESTVVLKTKL…YLNEKLKRTV (64 aa). Positions 164 and 167 each coordinate Cd(2+). Residues 258–270 are compositionally biased toward basic and acidic residues; the sequence is KKVDGGGEKKKEV. 2 disordered regions span residues 258–285 and 350–392; these read KKVD…GGDG and GQGY…CSVM. The span at 272–285 shows a compositional bias: gly residues; sequence VGGGGGGGGGGGDG. C389 carries the cysteine methyl ester modification. A lipid anchor (S-farnesyl cysteine) is attached at C389. Residues 390 to 392 constitute a propeptide, removed in mature form; it reads SVM.

Belongs to the HIPP family. As to expression, expressed in petioles, hypocotyls, peduncles, vascular bundles and root meristems.

It is found in the cell membrane. Heavy-metal-binding protein. Involved in the maintenance of heavy metal homeostasis and/or in detoxification. This chain is Heavy metal-associated isoprenylated plant protein 6, found in Arabidopsis thaliana (Mouse-ear cress).